The chain runs to 449 residues: Probable mitochondrial chaperone bcs1 (449 aa).

Topologically, residues 1-20 (MDNIGAADAATSSGISGLLS) are mitochondrial intermembrane. The helical transmembrane segment at 21 to 41 (GNSFLGAGIGLMGFGAGLAIL) threads the bilayer. Over 42-449 (RRGLISGASL…FNVHRKSLSV (408 aa)) the chain is Mitochondrial matrix. 249–256 (GPPGSGKT) lines the ATP pocket.

Belongs to the AAA ATPase family. BCS1 subfamily.

The protein resides in the mitochondrion inner membrane. The catalysed reaction is ATP + H2O = ADP + phosphate + H(+). In terms of biological role, chaperone necessary for the incorporation of Rieske iron-sulfur protein rip1 into the mitochondrial respiratory chain complex III. The chain is Probable mitochondrial chaperone bcs1 from Schizosaccharomyces pombe (strain 972 / ATCC 24843) (Fission yeast).